The sequence spans 411 residues: Anaerobic nitric oxide reductase flavorubredoxin homolog (411 aa).

The zinc metallo-hydrolase stretch occupies residues 30–210 (LRGSSYNSYL…PFSRLVTPKI (181 aa)). Residues His79, Glu81, Asp83, His147, Asp166, His227, Cys360, Cys363, Cys393, and Cys396 each coordinate Fe cation. Residues 355-406 (GPRMQCSVCQWIYDPAKGEPMQDVAPGTPWSEVPDNFLCPECSLGKDVFDEL) form the Rubredoxin-like domain.

The protein in the N-terminal section; belongs to the zinc metallo-hydrolase group 3 family. As to quaternary structure, homotetramer. Fe cation serves as cofactor.

It is found in the cytoplasm. It participates in nitrogen metabolism; nitric oxide reduction. Its function is as follows. Anaerobic nitric oxide reductase; uses NADH to detoxify nitric oxide (NO), protecting several 4Fe-4S NO-sensitive enzymes. Has at least 2 reductase partners, only one of which (NorW, flavorubredoxin reductase) has been identified. NO probably binds to the di-iron center. Also able to function as an aerobic oxygen reductase. The polypeptide is Anaerobic nitric oxide reductase flavorubredoxin homolog (Escherichia coli O157:H7).